A 206-amino-acid polypeptide reads, in one-letter code: Homoserine/homoserine lactone efflux protein (206 aa).

6 helical membrane-spanning segments follow: residues 5 to 25 (WWFA…SGAI), 45 to 65 (GLQT…GTLF), 68 to 88 (SLIA…WLGI), 117 to 137 (FVNL…PQFI), 148 to 168 (LILG…YATL), and 182 to 202 (MKAL…LLAS).

Belongs to the Rht family.

It localises to the cell membrane. Conducts the efflux of homoserine and homoserine lactone. This Salmonella typhi protein is Homoserine/homoserine lactone efflux protein (rhtB).